We begin with the raw amino-acid sequence, 202 residues long: Thymidine kinase (202 aa).

Residues glycine 16–serine 23 and aspartate 99–glutamine 102 contribute to the ATP site. The Proton acceptor role is filled by glutamate 100. 4 residues coordinate Zn(2+): cysteine 156, cysteine 159, cysteine 194, and histidine 197.

Belongs to the thymidine kinase family. Homotetramer.

It is found in the cytoplasm. It catalyses the reaction thymidine + ATP = dTMP + ADP + H(+). In Deinococcus deserti (strain DSM 17065 / CIP 109153 / LMG 22923 / VCD115), this protein is Thymidine kinase.